Here is a 381-residue protein sequence, read N- to C-terminus: Putative MgpC-like protein MPN_503 (381 aa).

Residues 1–109 (MNGVAQDKVH…TDSQQSGHNS (109 aa)) are disordered. Over residues 13–31 (EQTTQWNQQASQKNLTNNP) the composition is skewed to polar residues. Composition is skewed to basic and acidic residues over residues 40-51 (KLDKGRAYRKLN) and 61-73 (DSTK…DKDG). Over residues 89–109 (VSSTESQMAAVTDSQQSGHNS) the composition is skewed to polar residues.

This sequence belongs to the MgpC family.

This chain is Putative MgpC-like protein MPN_503, found in Mycoplasma pneumoniae (strain ATCC 29342 / M129 / Subtype 1) (Mycoplasmoides pneumoniae).